Consider the following 440-residue polypeptide: Xylose isomerase (440 aa).

Residues His100 and Asp103 contribute to the active site. Positions 231, 267, 270, 295, 306, 308, and 338 each coordinate Mg(2+).

This sequence belongs to the xylose isomerase family. In terms of assembly, homotetramer. Mg(2+) serves as cofactor.

It localises to the cytoplasm. The enzyme catalyses alpha-D-xylose = alpha-D-xylulofuranose. This Burkholderia multivorans (strain ATCC 17616 / 249) protein is Xylose isomerase.